We begin with the raw amino-acid sequence, 262 residues long: Cytochrome c oxidase subunit 2 (262 aa).

Transmembrane regions (helical) follow at residues 31–51 (HIMFYLCLILGLVSYILYVII) and 72–92 (IIWTIFPAVILLLIAFPSFIL). Cu cation-binding residues include H175, C210, E212, C214, H218, and M221. Mg(2+) is bound at residue E212.

It belongs to the cytochrome c oxidase subunit 2 family. In terms of assembly, component of the cytochrome c oxidase (complex IV, CIV), a multisubunit enzyme composed of a catalytic core of 3 subunits and several supernumerary subunits. The complex exists as a monomer or a dimer and forms supercomplexes (SCs) in the inner mitochondrial membrane with ubiquinol-cytochrome c oxidoreductase (cytochrome b-c1 complex, complex III, CIII). Cu cation serves as cofactor.

It localises to the mitochondrion inner membrane. The catalysed reaction is 4 Fe(II)-[cytochrome c] + O2 + 8 H(+)(in) = 4 Fe(III)-[cytochrome c] + 2 H2O + 4 H(+)(out). Functionally, component of the cytochrome c oxidase, the last enzyme in the mitochondrial electron transport chain which drives oxidative phosphorylation. The respiratory chain contains 3 multisubunit complexes succinate dehydrogenase (complex II, CII), ubiquinol-cytochrome c oxidoreductase (cytochrome b-c1 complex, complex III, CIII) and cytochrome c oxidase (complex IV, CIV), that cooperate to transfer electrons derived from NADH and succinate to molecular oxygen, creating an electrochemical gradient over the inner membrane that drives transmembrane transport and the ATP synthase. Cytochrome c oxidase is the component of the respiratory chain that catalyzes the reduction of oxygen to water. Electrons originating from reduced cytochrome c in the intermembrane space (IMS) are transferred via the dinuclear copper A center (CU(A)) of subunit 2 and heme A of subunit 1 to the active site in subunit 1, a binuclear center (BNC) formed by heme A3 and copper B (CU(B)). The BNC reduces molecular oxygen to 2 water molecules using 4 electrons from cytochrome c in the IMS and 4 protons from the mitochondrial matrix. The protein is Cytochrome c oxidase subunit 2 (COX2) of Candida albicans (strain SC5314 / ATCC MYA-2876) (Yeast).